A 452-amino-acid chain; its full sequence is uncharacterized protein (452 aa).

It belongs to the HypE family.

This is an uncharacterized protein from Methanocaldococcus jannaschii (strain ATCC 43067 / DSM 2661 / JAL-1 / JCM 10045 / NBRC 100440) (Methanococcus jannaschii).